Consider the following 612-residue polypeptide: Elongation factor 4 (612 aa).

The tr-type G domain maps to 11–193 (KHIRNFSIIA…RIVTDVPAPS (183 aa)). Residues 23 to 28 (DHGKST) and 140 to 143 (NKVD) each bind GTP.

Belongs to the TRAFAC class translation factor GTPase superfamily. Classic translation factor GTPase family. LepA subfamily.

It is found in the cell membrane. It carries out the reaction GTP + H2O = GDP + phosphate + H(+). Its function is as follows. Required for accurate and efficient protein synthesis under certain stress conditions. May act as a fidelity factor of the translation reaction, by catalyzing a one-codon backward translocation of tRNAs on improperly translocated ribosomes. Back-translocation proceeds from a post-translocation (POST) complex to a pre-translocation (PRE) complex, thus giving elongation factor G a second chance to translocate the tRNAs correctly. Binds to ribosomes in a GTP-dependent manner. This is Elongation factor 4 from Lacticaseibacillus paracasei (strain ATCC 334 / BCRC 17002 / CCUG 31169 / CIP 107868 / KCTC 3260 / NRRL B-441) (Lactobacillus paracasei).